Consider the following 726-residue polypeptide: Probable cadmium-transporting ATPase (726 aa).

Positions 11-74 (DKQVYRVEGF…AGAFENLKVF (64 aa)) constitute an HMA domain. Cd(2+)-binding residues include Cys22 and Cys25. The next 5 membrane-spanning stretches (helical) occupy residues 105–125 (STLLFATLLIAFGYLSHFVNG), 129–149 (LVTSMLFVGSIVIGGYSLFKV), 163–179 (TLMTVAVIGAAIIGEWA), 335–355 (IIMVIAALVAVVPPLFFGGSW), and 363–383 (LAVLVVGCPCALVISTPISIV). Asp414 serves as the catalytic 4-aspartylphosphate intermediate. 2 helical membrane-spanning segments follow: residues 671–693 (LNIIKANITFAIGIKIIALLLVI) and 698–720 (TLWIAILSDMGATILVALNSLRL).

This sequence belongs to the cation transport ATPase (P-type) (TC 3.A.3) family. Type IB subfamily.

It localises to the cell membrane. It catalyses the reaction Cd(2+)(in) + ATP + H2O = Cd(2+)(out) + ADP + phosphate + H(+). Functionally, couples the hydrolysis of ATP with the export of cadmium. This Staphylococcus aureus (strain MRSA252) protein is Probable cadmium-transporting ATPase (cadA).